The chain runs to 1105 residues: Ran-binding protein 6 (1105 aa).

Alanine 2 is modified (N-acetylalanine). 7 HEAT repeats span residues 219–257, 361–399, 402–440, 444–483, 866–905, 908–946, and 949–987; these read FKDFADLLPGILQAVNDSCYQDDDSVLESLVEIADTVPK, KVVLPMTKEHIMQMLQSPDWKCRHAGLMALSAIGEGCHQ, EPILDETVNSVLLFLQDPHPRVRAAACTTLGQMATDFAP, KKFHEIVITALLRTMENQGNQRVQSHAASALVIFIEDCPK, LPWFEQLLPLIVNLICSSRPWPDRQWGLCIFDDIIEHCSP, FKYVEYFRWPMLLNMRDNNPEVRQAAAYGLGVMAQFGGD, and RSLCSEAVPLLVKVIKCANSKTKKNVIATENCISAIGKI.

It belongs to the importin beta family.

The protein localises to the cytoplasm. It localises to the nucleus. May function in nuclear protein import as nuclear transport receptor. This is Ran-binding protein 6 (Ranbp6) from Mus musculus (Mouse).